Here is a 235-residue protein sequence, read N- to C-terminus: Biosynthetic peptidoglycan transglycosylase (235 aa).

A helical membrane pass occupies residues 12–34; the sequence is GLGKLLLAALLSTIVSVALLRFI.

Belongs to the glycosyltransferase 51 family.

The protein localises to the cell inner membrane. The catalysed reaction is [GlcNAc-(1-&gt;4)-Mur2Ac(oyl-L-Ala-gamma-D-Glu-L-Lys-D-Ala-D-Ala)](n)-di-trans,octa-cis-undecaprenyl diphosphate + beta-D-GlcNAc-(1-&gt;4)-Mur2Ac(oyl-L-Ala-gamma-D-Glu-L-Lys-D-Ala-D-Ala)-di-trans,octa-cis-undecaprenyl diphosphate = [GlcNAc-(1-&gt;4)-Mur2Ac(oyl-L-Ala-gamma-D-Glu-L-Lys-D-Ala-D-Ala)](n+1)-di-trans,octa-cis-undecaprenyl diphosphate + di-trans,octa-cis-undecaprenyl diphosphate + H(+). It participates in cell wall biogenesis; peptidoglycan biosynthesis. Functionally, peptidoglycan polymerase that catalyzes glycan chain elongation from lipid-linked precursors. The sequence is that of Biosynthetic peptidoglycan transglycosylase from Aeromonas hydrophila subsp. hydrophila (strain ATCC 7966 / DSM 30187 / BCRC 13018 / CCUG 14551 / JCM 1027 / KCTC 2358 / NCIMB 9240 / NCTC 8049).